The sequence spans 157 residues: N-acetylgalactosamine-specific phosphotransferase enzyme IIB component 2 (157 aa).

The 157-residue stretch at 1-157 folds into the PTS EIIB type-4 domain; it reads MPNIVLSRID…EPAVDLFKLL (157 aa). H15 acts as the Pros-phosphohistidine intermediate in catalysis.

The protein resides in the cytoplasm. The phosphoenolpyruvate-dependent sugar phosphotransferase system (sugar PTS), a major carbohydrate active -transport system, catalyzes the phosphorylation of incoming sugar substrates concomitantly with their translocation across the cell membrane. This system is involved in N-acetylgalactosamine transport. This Escherichia coli (strain K12) protein is N-acetylgalactosamine-specific phosphotransferase enzyme IIB component 2 (agaV).